The chain runs to 244 residues: 5-oxoprolinase subunit A (244 aa).

The protein belongs to the LamB/PxpA family. In terms of assembly, forms a complex composed of PxpA, PxpB and PxpC.

The catalysed reaction is 5-oxo-L-proline + ATP + 2 H2O = L-glutamate + ADP + phosphate + H(+). Its function is as follows. Catalyzes the cleavage of 5-oxoproline to form L-glutamate coupled to the hydrolysis of ATP to ADP and inorganic phosphate. This is 5-oxoprolinase subunit A from Escherichia coli O6:K15:H31 (strain 536 / UPEC).